A 439-amino-acid chain; its full sequence is MKNMLNIILTLTIIFIGLIKISISSDSGSSENGIYFYTYDTICEFTNSIRDDDQYELYYVQAPLMYAIYGDLFEKINAYHSGVGFYNLNGGPNISIDYFAGPTLEDALIPQNITKDSQGNYNLTWNTYGLIEVTNYINETYWSKRELIMYGLTGLQVKQYLSWAPIYNQTHPVYNLFSIASADASGSGDNGYLETILHNLGIGGGGGGSGSENLIVYQNSSTCDDFVWASFNTIYQLGGTLVGMQSNPPKDQITLFTTDEPTIVDYNNITQRNQLASFYINLMGIANKNESALQIFQELISLFNGTFYCYIDGVYYELHLSKPTPISFTYQPSPMPTGQRNSNSIETLNNCYSKSSTDNQSFFNRFSKIQIIFISIAIGFGVVIILYISIGIMVNKSRGKSGTNLIPNKKLWTSIGSKFKRDNNKNNYKPLLYNENTIQ.

The N-terminal stretch at 1–24 (MKNMLNIILTLTIIFIGLIKISIS) is a signal peptide. N-linked (GlcNAc...) asparagine glycosylation is found at Asn-93, Asn-112, Asn-122, Asn-138, Asn-168, Asn-219, Asn-268, Asn-289, Asn-304, and Asn-359. A helical transmembrane segment spans residues 371–391 (IIFISIAIGFGVVIILYISIG).

It belongs to the CLN5 family.

Its subcellular location is the membrane. In Dictyostelium discoideum (Social amoeba), this protein is Cln5-like protein 3 (cln5lc).